The chain runs to 301 residues: EVKLSGDARMGVMYNGDDWNFSSRSRVLFTMSGTTDSGLEFGASFKAHESVGAETGEDGTVFLSGAFGKIEMGDALGASEALFGDLYEVGYTDLDDRGGNDIPYLTGDERLTAEDNPVLLYTYSAGAFSVAASMSDGKVGETSEDDAQEMAVAAAYTFGNYTVGLGYEKIDSPDTALMADMEQLELAAIAKFGATNVKAYYADGELDRDFARAVFDLTPVAAAATAVDHKAYGLSVDSTFGATTVGGYVQVLDIDTIDDVTYYGLGASYDLGGGASIVGGIADNDLPNSDMVADLGVKFKF.

In terms of assembly, homotrimer.

It is found in the cell outer membrane. Its function is as follows. Forms channels that allow the passive diffusion of small hydrophilic solutes up to an exclusion limit of about 0.6 kDa. The sequence is that of Porin from Rhodobacter capsulatus (Rhodopseudomonas capsulata).